The following is a 95-amino-acid chain: UPF0235 protein PTH_1821 (95 aa).

This sequence belongs to the UPF0235 family.

This is UPF0235 protein PTH_1821 from Pelotomaculum thermopropionicum (strain DSM 13744 / JCM 10971 / SI).